The chain runs to 367 residues: GTPase Obg (367 aa).

Residues 1–158 (MFIDNVELTV…VQIRLELKLI (158 aa)) form the Obg domain. The OBG-type G domain maps to 159 to 358 (ADVGLVGFPN…LKYALYDLVK (200 aa)). GTP contacts are provided by residues 165 to 172 (GFPNVGKS), 190 to 194 (FTTLT), 212 to 215 (DIPG), 280 to 283 (TKID), and 339 to 341 (SAV). Mg(2+) is bound by residues serine 172 and threonine 192.

It belongs to the TRAFAC class OBG-HflX-like GTPase superfamily. OBG GTPase family. In terms of assembly, monomer. Mg(2+) serves as cofactor.

It localises to the cytoplasm. In terms of biological role, an essential GTPase which binds GTP, GDP and possibly (p)ppGpp with moderate affinity, with high nucleotide exchange rates and a fairly low GTP hydrolysis rate. Plays a role in control of the cell cycle, stress response, ribosome biogenesis and in those bacteria that undergo differentiation, in morphogenesis control. The protein is GTPase Obg of Nitratiruptor sp. (strain SB155-2).